A 219-amino-acid chain; its full sequence is Neurotrophic factor BDNF precursor form (219 aa).

The N-terminal stretch at 1-5 is a signal peptide; sequence SCMKA. A propeptide spanning residues 6-114 is cleaved from the precursor; the sequence is APMKEVSIRG…AANMSMRVRR (109 aa). N-linked (GlcNAc...) asparagine glycosylation occurs at N107. C127 and C194 form a disulfide bridge.

This sequence belongs to the NGF-beta family.

It localises to the secreted. Its function is as follows. Promotes the survival of neuronal populations that are all located either in the central nervous system or directly connected to it. The sequence is that of Neurotrophic factor BDNF precursor form (BDNF) from Loxocemus bicolor (Mexican burrowing python).